Consider the following 156-residue polypeptide: ATP synthase subunit b (156 aa).

A helical transmembrane segment spans residues 12–32 (VAFFIFVLFCMKYVWPPVIAA).

The protein belongs to the ATPase B chain family. F-type ATPases have 2 components, F(1) - the catalytic core - and F(0) - the membrane proton channel. F(1) has five subunits: alpha(3), beta(3), gamma(1), delta(1), epsilon(1). F(0) has three main subunits: a(1), b(2) and c(10-14). The alpha and beta chains form an alternating ring which encloses part of the gamma chain. F(1) is attached to F(0) by a central stalk formed by the gamma and epsilon chains, while a peripheral stalk is formed by the delta and b chains.

Its subcellular location is the cell inner membrane. Its function is as follows. F(1)F(0) ATP synthase produces ATP from ADP in the presence of a proton or sodium gradient. F-type ATPases consist of two structural domains, F(1) containing the extramembraneous catalytic core and F(0) containing the membrane proton channel, linked together by a central stalk and a peripheral stalk. During catalysis, ATP synthesis in the catalytic domain of F(1) is coupled via a rotary mechanism of the central stalk subunits to proton translocation. In terms of biological role, component of the F(0) channel, it forms part of the peripheral stalk, linking F(1) to F(0). The polypeptide is ATP synthase subunit b (Pseudomonas syringae pv. tomato (strain ATCC BAA-871 / DC3000)).